The chain runs to 347 residues: NADH-quinone oxidoreductase subunit H (347 aa).

Helical transmembrane passes span 22–42, 59–79, 93–113, 124–144, 171–191, 198–218, 240–260, 285–305, and 321–341; these read GVVSIKVIALIICLLLATAYL, PSLAGPFGLLQPIADAVKLVF, FIIAPIITFVLSLLGWSVIPI, IGGILFILAVTSLGVYGIIIA, MALSIVAVLIVTGEMDLIQIV, PIWLTIMMLPLAVIYFISILA, VEYSSMAFAMFFLGEYANMIL, IPGYIWFILKVSMVLFCFLWI, and GLKVFLPIVLAWIIVVSAILV.

This sequence belongs to the complex I subunit 1 family. As to quaternary structure, NDH-1 is composed of 14 different subunits. Subunits NuoA, H, J, K, L, M, N constitute the membrane sector of the complex.

It localises to the cell inner membrane. It catalyses the reaction a quinone + NADH + 5 H(+)(in) = a quinol + NAD(+) + 4 H(+)(out). Its function is as follows. NDH-1 shuttles electrons from NADH, via FMN and iron-sulfur (Fe-S) centers, to quinones in the respiratory chain. The immediate electron acceptor for the enzyme in this species is believed to be ubiquinone. Couples the redox reaction to proton translocation (for every two electrons transferred, four hydrogen ions are translocated across the cytoplasmic membrane), and thus conserves the redox energy in a proton gradient. This subunit may bind ubiquinone. This chain is NADH-quinone oxidoreductase subunit H, found in Orientia tsutsugamushi (strain Ikeda) (Rickettsia tsutsugamushi).